A 120-amino-acid chain; its full sequence is Accessory gland protein Acp53Ea (120 aa).

An N-terminal signal peptide occupies residues 1–23; the sequence is MKLIKVTLVFSLLALVFVAQTEA.

Main cells of accessory gland and seminal fluid.

It localises to the secreted. In terms of biological role, responsible for physiological and behavioral changes in mated female flies. This is Accessory gland protein Acp53Ea (Acp53Ea) from Drosophila melanogaster (Fruit fly).